A 992-amino-acid polypeptide reads, in one-letter code: UvrABC system protein A (992 aa).

Over residues 1-11 (MPKNSSTTVSS) the composition is skewed to polar residues. Positions 1–30 (MPKNSSTTVSSAVEAHAGGLASGPGGARSG) are disordered. Position 62-69 (62-69 (GLSGSGKS)) interacts with ATP. The C4-type; atypical zinc finger occupies 302–330 (CPNGHEQTVDEIEPRSFSFNNPFGACPEC). 2 ABC transporter domains span residues 360–639 (WSLG…TRSV) and 659–988 (PEKG…RFLA). Residue 692–699 (GVSGSGKS) participates in ATP binding. The C4-type zinc finger occupies 791–817 (CEACAGDGTLKIEMNFLPDVYVPCEVC).

Belongs to the ABC transporter superfamily. UvrA family. As to quaternary structure, forms a heterotetramer with UvrB during the search for lesions.

It localises to the cytoplasm. Functionally, the UvrABC repair system catalyzes the recognition and processing of DNA lesions. UvrA is an ATPase and a DNA-binding protein. A damage recognition complex composed of 2 UvrA and 2 UvrB subunits scans DNA for abnormalities. When the presence of a lesion has been verified by UvrB, the UvrA molecules dissociate. The chain is UvrABC system protein A from Micrococcus luteus (Micrococcus lysodeikticus).